A 591-amino-acid polypeptide reads, in one-letter code: MATKASSILHPPNETEHTMSRITQEGKKLTYNLKVIQQPERARACGAGAKSSADRRPVDPPPVVELRVFESDLNDQHKTDITFSYNANFFLFATLEWARPIAHGRVQTQTPSCPVLTGVPVAGIAYLDRPTQAGYFIFPDLSVRHEGLYRLNFNLYEEMKEPKHADKGGLVPHSQNHMAPLTPSKPRSPHQFLHFRLVVKSVPFTVYSAKKFPGLAESTSLSRIVAEQGCRVRIRRDVRMRRREPKPNKDYGAYDDRRITPDPYPGTPVERPRSASNASMDDPYRYPTGPPQVQPSPDYGYHHPSHQQPSPNLAATPQSHLSFGAAPPQYHAPPPPPTAHPAPPPAYTSPHLGYTHTRQLSAGPEYDPHRQKYTQYPPPSPHSDIYDQSKSSLPMNPSVDHPSYPPMPYEQRMSDPKLYAPPSQLHPTQQYQQPTPPPPPPAAIAPHPPHQRTPTKPSPSTFFPPTPSRLSVEVDSSNEADDAILNAIRTRRGYILDEKSGATKRSRDSSDHDLKPLRNGQRPVVSGDEAAKGEIGETSGGSDDEIMTYRRADGRLVAKQRVSVHSKGKEVNIPRDVDLLPRRPEVCAVAE.

Residues 1–22 (MATKASSILHPPNETEHTMSRI) are disordered. Residues 13-22 (NETEHTMSRI) show a composition bias toward basic and acidic residues. Residues 26 to 235 (GKKLTYNLKV…AEQGCRVRIR (210 aa)) enclose the Velvet domain. The Nuclear localization signal motif lies at 40–45 (ERARAC). Residues 238 to 547 (VRMRRREPKP…TSGGSDDEIM (310 aa)) are disordered. Over residues 245–260 (PKPNKDYGAYDDRRIT) the composition is skewed to basic and acidic residues. The span at 306–321 (HQQPSPNLAATPQSHL) shows a compositional bias: polar residues. Pro residues predominate over residues 330–347 (YHAPPPPPTAHPAPPPAY). Residues 386–395 (YDQSKSSLPM) show a composition bias toward polar residues. The segment covering 422-433 (PSQLHPTQQYQQ) has biased composition (low complexity). Residues 434 to 448 (PTPPPPPPAAIAPHP) show a composition bias toward pro residues. The tract at residues 452–493 (RTPTKPSPSTFFPPTPSRLSVEVDSSNEADDAILNAIRTRRG) is PEST. Positions 494 to 516 (YILDEKSGATKRSRDSSDHDLKP) are enriched in basic and acidic residues.

Belongs to the velvet family. VeA subfamily. In terms of assembly, component of the heterotrimeric velvet complex composed of LAE1, VEA1 and VEL2; VEA1 acting as a bridging protein between LAE1 and VEL2.

It is found in the nucleus. The protein localises to the cytoplasm. In terms of biological role, component of the velvet transcription factor complex that controls sexual/asexual developmental ratio in response to light, promoting sexual development in the darkness while stimulating asexual sporulation under illumination. The velvet complex hat acts as a global regulator for secondary metabolite gene expression. Regulates cleistothecial formation and hyphal growth. Acts as a positive regulator of virulence. This chain is Developmental and secondary metabolism regulator VEA1, found in Ajellomyces capsulatus (Darling's disease fungus).